The following is a 358-amino-acid chain: UDP-N-acetylglucosamine--N-acetylmuramyl-(pentapeptide) pyrophosphoryl-undecaprenol N-acetylglucosamine transferase (358 aa).

Residues serine 196 and glutamine 287 each contribute to the UDP-N-acetyl-alpha-D-glucosamine site.

It belongs to the glycosyltransferase 28 family. MurG subfamily.

It localises to the cell membrane. The catalysed reaction is Mur2Ac(oyl-L-Ala-gamma-D-Glu-L-Lys-D-Ala-D-Ala)-di-trans,octa-cis-undecaprenyl diphosphate + UDP-N-acetyl-alpha-D-glucosamine = beta-D-GlcNAc-(1-&gt;4)-Mur2Ac(oyl-L-Ala-gamma-D-Glu-L-Lys-D-Ala-D-Ala)-di-trans,octa-cis-undecaprenyl diphosphate + UDP + H(+). The protein operates within cell wall biogenesis; peptidoglycan biosynthesis. In terms of biological role, cell wall formation. Catalyzes the transfer of a GlcNAc subunit on undecaprenyl-pyrophosphoryl-MurNAc-pentapeptide (lipid intermediate I) to form undecaprenyl-pyrophosphoryl-MurNAc-(pentapeptide)GlcNAc (lipid intermediate II). The sequence is that of UDP-N-acetylglucosamine--N-acetylmuramyl-(pentapeptide) pyrophosphoryl-undecaprenol N-acetylglucosamine transferase from Streptococcus uberis (strain ATCC BAA-854 / 0140J).